The primary structure comprises 146 residues: Large ribosomal subunit protein uL15 (146 aa).

The segment at 1 to 66 (MKLHELKPAP…LQRRMPKRGF (66 aa)) is disordered. Gly residues-rich tracts occupy residues 21–31 (QGIGSGMGKTA) and 42–52 (SGGGVRPGFEG).

This sequence belongs to the universal ribosomal protein uL15 family. In terms of assembly, part of the 50S ribosomal subunit.

Functionally, binds to the 23S rRNA. In Pelotomaculum thermopropionicum (strain DSM 13744 / JCM 10971 / SI), this protein is Large ribosomal subunit protein uL15.